Consider the following 258-residue polypeptide: MDQLKKPHILLCNDDGIEGEGLHALAASMKKIGNITVVAPAEPHSGMSHAMTLGTPLRIKKYYKNNRFFGYTVSGTPVDCVKVALSQILPSKPDLLVSGINYGSNTATNTLYSGTVAAALEGAIQGITSLAFSLATYENADFSYAAKFARKLSKKVLTEGLPPDTILSVNIPNIPESEIQGILVTEQGRSRWEEDAIERHDVYGNPYYWLNGTLMLLDTSLQHDEYAVRKHYVAVTPISCDFTNRDFMGSLEQWNLKK.

The a divalent metal cation site is built by Asp-14, Asp-15, Ser-45, and Asn-101.

Belongs to the SurE nucleotidase family. Requires a divalent metal cation as cofactor.

The protein localises to the cytoplasm. It catalyses the reaction a ribonucleoside 5'-phosphate + H2O = a ribonucleoside + phosphate. In terms of biological role, nucleotidase that shows phosphatase activity on nucleoside 5'-monophosphates. The chain is 5'-nucleotidase SurE from Chlorobium phaeobacteroides (strain DSM 266 / SMG 266 / 2430).